The primary structure comprises 420 residues: Protein ECERIFERUM 26-like (420 aa).

This sequence belongs to the plant acyltransferase family. In terms of tissue distribution, highly expressed in flowers. Expressed in leaves.

Involved in biosynthesis of the epicuticular wax. Plays a role in very-long-chain fatty acid (VLCFA) biosynthesis and is required for VLCFA elongation in leaf. Despite its classification as a BAHD acyltransferase based on sequence homology, CER26L does not seem to share the catalytic mechanism of the members of the BAHD family. The protein is Protein ECERIFERUM 26-like (CER26L) of Arabidopsis thaliana (Mouse-ear cress).